Consider the following 184-residue polypeptide: Ribosome-recycling factor (184 aa).

The protein belongs to the RRF family.

It localises to the cytoplasm. Responsible for the release of ribosomes from messenger RNA at the termination of protein biosynthesis. May increase the efficiency of translation by recycling ribosomes from one round of translation to another. This Mycoplasma pneumoniae (strain ATCC 29342 / M129 / Subtype 1) (Mycoplasmoides pneumoniae) protein is Ribosome-recycling factor.